Consider the following 130-residue polypeptide: Small ribosomal subunit protein uS8 (130 aa).

The protein belongs to the universal ribosomal protein uS8 family. Part of the 30S ribosomal subunit. Contacts proteins S5 and S12.

Its function is as follows. One of the primary rRNA binding proteins, it binds directly to 16S rRNA central domain where it helps coordinate assembly of the platform of the 30S subunit. The polypeptide is Small ribosomal subunit protein uS8 (Neisseria meningitidis serogroup C (strain 053442)).